The sequence spans 434 residues: CinA-like protein (434 aa).

It belongs to the CinA family.

The sequence is that of CinA-like protein from Mycobacterium avium (strain 104).